Reading from the N-terminus, the 201-residue chain is dCTP deaminase, dUMP-forming (201 aa).

DCTP-binding positions include Lys-101–Arg-106, Asp-119, Thr-127–Glu-129, Gln-148, Tyr-162, and Gln-174. Glu-129 functions as the Proton donor/acceptor in the catalytic mechanism. Polar residues predominate over residues Glu-166–Phe-183. The disordered stretch occupies residues Glu-166–Ser-201.

This sequence belongs to the dCTP deaminase family. As to quaternary structure, homotrimer.

The enzyme catalyses dCTP + 2 H2O = dUMP + NH4(+) + diphosphate. It functions in the pathway pyrimidine metabolism; dUMP biosynthesis; dUMP from dCTP: step 1/1. In terms of biological role, bifunctional enzyme that catalyzes both the deamination of dCTP to dUTP and the hydrolysis of dUTP to dUMP without releasing the toxic dUTP intermediate. This Leifsonia xyli subsp. xyli (strain CTCB07) protein is dCTP deaminase, dUMP-forming.